Here is an 83-residue protein sequence, read N- to C-terminus: UPF0270 protein CGSHiEE_07180 (83 aa).

Belongs to the UPF0270 family.

In Haemophilus influenzae (strain PittEE), this protein is UPF0270 protein CGSHiEE_07180.